A 449-amino-acid chain; its full sequence is Allantoinase (449 aa).

Zn(2+) contacts are provided by His59, His61, Lys146, His182, His238, and Asp311. Lys146 bears the N6-carboxylysine mark.

This sequence belongs to the metallo-dependent hydrolases superfamily. Allantoinase family. Homotetramer. It depends on Zn(2+) as a cofactor. Carboxylation allows a single lysine to coordinate two zinc ions.

The enzyme catalyses (S)-allantoin + H2O = allantoate + H(+). It participates in nitrogen metabolism; (S)-allantoin degradation; allantoate from (S)-allantoin: step 1/1. Functionally, catalyzes the conversion of allantoin (5-ureidohydantoin) to allantoic acid by hydrolytic cleavage of the five-member hydantoin ring. In Deinococcus geothermalis (strain DSM 11300 / CIP 105573 / AG-3a), this protein is Allantoinase.